A 397-amino-acid polypeptide reads, in one-letter code: Major outer membrane porin, serovar C (397 aa).

An N-terminal signal peptide occupies residues 1–22 (MKKLLKSVLVFAALSSASSLQA).

Belongs to the chlamydial porin (CP) (TC 1.B.2) family. Part of a disulfide cross-linked outer membrane complex (COMC) composed of the major outer membrane porin (MOMP), the small cysteine-rich protein (OmcA) and the large cysteine-rich periplasmic protein (OmcB).

The protein localises to the cell outer membrane. Its function is as follows. In elementary bodies (EBs, the infectious stage, which is able to survive outside the host cell) provides the structural integrity of the outer envelope through disulfide cross-links with the small cysteine-rich protein and the large cysteine-rich periplasmic protein. It has been described in publications as the Sarkosyl-insoluble COMC (Chlamydia outer membrane complex), and serves as the functional equivalent of peptidoglycan. Permits diffusion of specific solutes through the outer membrane. The chain is Major outer membrane porin, serovar C (ompA) from Chlamydia trachomatis.